Consider the following 688-residue polypeptide: GTPase IMAP family member 8 (688 aa).

Low complexity predominate over residues 1–14; that stretch reads MATSSHQGAAAGSQ. Residues 1–42 form a disordered region; that stretch reads MATSSHQGAAAGSQAEHRSCEASVGQGERPSASQGQEGNFKQ. Residues 31–42 show a composition bias toward polar residues; it reads SASQGQEGNFKQ. AIG1-type G domains follow at residues 46–247, 282–472, and 473–677; these read TSTL…MESS, MPEL…VIRE, and KELL…GQLK. The tract at residues 55-62 is G1; sequence GKQGAGKS. GTP-binding positions include 55-63 and Ser76; that span reads GKQGAGKSA. The G2 stretch occupies residues 82 to 86; it reads MVTDR. Residues 103–106 are G3; sequence DTPD. Residues 172 to 175 are G4; the sequence is TRED. Residues 173–175 and Asn209 contribute to the GTP site; that span reads RED. The segment at 208–210 is G5; the sequence is NNK.

This sequence belongs to the TRAFAC class TrmE-Era-EngA-EngB-Septin-like GTPase superfamily. AIG1/Toc34/Toc159-like paraseptin GTPase family. IAN subfamily. As to expression, abundantly expressed in the thymus (in thymocytes), spleen (in splenocytes), lymph node, followed by bone marrow and lung.

The protein localises to the endoplasmic reticulum. Its subcellular location is the golgi apparatus. It is found in the mitochondrion. It localises to the cytoplasm. The protein resides in the cytosol. Its function is as follows. Exerts an anti-apoptotic effect in the immune system and is involved in responses to infections. In Mus musculus (Mouse), this protein is GTPase IMAP family member 8 (Gimap8).